Reading from the N-terminus, the 617-residue chain is Vacuolar protein sorting-associated protein 33B (617 aa).

Alanine 2 is subject to N-acetylalanine.

The protein belongs to the STXBP/unc-18/SEC1 family. In terms of assembly, interacts with RAB11A and VIPAS39. Interacts with RAB25. Associates with adapter protein complex 3 (AP-3), clathrin:AP-3 and clathrin:HGS complexes. As to quaternary structure, (Microbial infection) Interacts with M.tuberculosis PtpA. Post-translationally, phosphorylated on tyrosine residues. In terms of processing, (Microbial infection) Dephosphorylated by M.tuberculosis PtpA, which induces the reduction of host phagolysosome fusion in M.tuberculosis-infected macrophages. In terms of tissue distribution, ubiquitous; highly expressed in testis and low expression in the lung.

It is found in the late endosome membrane. The protein resides in the lysosome membrane. The protein localises to the early endosome. Its subcellular location is the cytoplasmic vesicle. It localises to the clathrin-coated vesicle. It is found in the recycling endosome. May play a role in vesicle-mediated protein trafficking to lysosomal compartments and in membrane docking/fusion reactions of late endosomes/lysosomes. Required for proper trafficking and targeting of the collagen-modifying enzyme lysyl hydroxylase 3 (LH3) to intracellular collagen. Mediates phagolysosomal fusion in macrophages. Proposed to be involved in endosomal maturation implicating VIPAS39. In epithelial cells, the VPS33B:VIPAS39 complex may play a role in the apical recycling pathway and in the maintenance of the apical-basolateral polarity. Seems to be involved in the sorting of specific cargos from the trans-Golgi network to alpha-granule-destined multivesicular bodies (MVBs) promoting MVBs maturation in megakaryocytes. The polypeptide is Vacuolar protein sorting-associated protein 33B (VPS33B) (Homo sapiens (Human)).